Here is a 186-residue protein sequence, read N- to C-terminus: Ribosome-recycling factor (186 aa).

Belongs to the RRF family.

Its subcellular location is the cytoplasm. Its function is as follows. Responsible for the release of ribosomes from messenger RNA at the termination of protein biosynthesis. May increase the efficiency of translation by recycling ribosomes from one round of translation to another. The protein is Ribosome-recycling factor of Bacteroides thetaiotaomicron (strain ATCC 29148 / DSM 2079 / JCM 5827 / CCUG 10774 / NCTC 10582 / VPI-5482 / E50).